A 64-amino-acid chain; its full sequence is MSKAKTHSGAAKRFKKTASGYKHKHAFKSHILTKMTTKRKRQLRGTSLLNAADKPAVDRMLRAN.

Residues 1 to 28 (MSKAKTHSGAAKRFKKTASGYKHKHAFK) are compositionally biased toward basic residues. The interval 1-51 (MSKAKTHSGAAKRFKKTASGYKHKHAFKSHILTKMTTKRKRQLRGTSLLNA) is disordered.

Belongs to the bacterial ribosomal protein bL35 family.

The chain is Large ribosomal subunit protein bL35 from Saccharophagus degradans (strain 2-40 / ATCC 43961 / DSM 17024).